Here is a 500-residue protein sequence, read N- to C-terminus: Cytochrome P450 2D28 (500 aa).

Position 446 (C446) interacts with heme.

Belongs to the cytochrome P450 family. Requires heme as cofactor.

It is found in the endoplasmic reticulum membrane. It localises to the microsome membrane. This chain is Cytochrome P450 2D28 (CYP2D28A), found in Mesocricetus auratus (Golden hamster).